We begin with the raw amino-acid sequence, 166 residues long: NAD(P)H-quinone oxidoreductase subunit I, chloroplastic (166 aa).

4Fe-4S ferredoxin-type domains follow at residues 55–84 and 95–124; these read GRIHFEFDKCIACEVCVRVCPIDLPVVDWK and LNYSIDFGICIFCGHCVEYCPTNCLSMTEE. Cysteine 64, cysteine 67, cysteine 70, cysteine 74, cysteine 104, cysteine 107, cysteine 110, and cysteine 114 together coordinate [4Fe-4S] cluster.

This sequence belongs to the complex I 23 kDa subunit family. As to quaternary structure, NDH is composed of at least 16 different subunits, 5 of which are encoded in the nucleus. Requires [4Fe-4S] cluster as cofactor.

Its subcellular location is the plastid. It is found in the chloroplast thylakoid membrane. It catalyses the reaction a plastoquinone + NADH + (n+1) H(+)(in) = a plastoquinol + NAD(+) + n H(+)(out). It carries out the reaction a plastoquinone + NADPH + (n+1) H(+)(in) = a plastoquinol + NADP(+) + n H(+)(out). NDH shuttles electrons from NAD(P)H:plastoquinone, via FMN and iron-sulfur (Fe-S) centers, to quinones in the photosynthetic chain and possibly in a chloroplast respiratory chain. The immediate electron acceptor for the enzyme in this species is believed to be plastoquinone. Couples the redox reaction to proton translocation, and thus conserves the redox energy in a proton gradient. The polypeptide is NAD(P)H-quinone oxidoreductase subunit I, chloroplastic (Perymeniopsis ovalifolia).